Here is a 319-residue protein sequence, read N- to C-terminus: MATTKPYRVLLYYMYTTIENPEEFAAEHLAFCNSLELKGRILVAKEGINGTCSGTVEQTEKYMEAMNNDPRFDGIVFKIDEADGHAFKKMHVRPRPELVTLRLEDDINPHEITGKYLEPKDFYEAMKQEDTVIIDARNDYEFDLGHFKGAIKPDIESFRELPDWIRENKEVLEGKKILTYCTGGIRCEKFSGWLVREGYEDVSQLHGGIVTYGKDPEVQGELWDGQCYVFDERIAVPVNQKEHVIVGKDHFTGEPCERYVNCANPECNKKILCSEENEAKYLRACSHECRVSPRNRYVIQHELTEEQVAAALEKIEAGK.

The Rhodanese domain occupies 127 to 221; sequence KQEDTVIIDA…YGKDPEVQGE (95 aa). The active-site Cysteine persulfide intermediate is cysteine 181.

The protein belongs to the TrhO family.

It carries out the reaction uridine(34) in tRNA + AH2 + O2 = 5-hydroxyuridine(34) in tRNA + A + H2O. Functionally, catalyzes oxygen-dependent 5-hydroxyuridine (ho5U) modification at position 34 in tRNAs. The polypeptide is tRNA uridine(34) hydroxylase (Bacillus thuringiensis (strain Al Hakam)).